The primary structure comprises 376 residues: Queuine tRNA-ribosyltransferase accessory subunit 2 (376 aa).

Zn(2+)-binding residues include Cys323, Cys325, Cys328, and His354.

Belongs to the queuine tRNA-ribosyltransferase family. QTRT2 subfamily. Heterodimer of a catalytic subunit and an accessory subunit. Requires Zn(2+) as cofactor.

The protein localises to the cytoplasm. In terms of biological role, non-catalytic subunit of the queuine tRNA-ribosyltransferase (TGT) that catalyzes the base-exchange of a guanine (G) residue with queuine (Q) at position 34 (anticodon wobble position) in tRNAs with GU(N) anticodons (tRNA-Asp, -Asn, -His and -Tyr), resulting in the hypermodified nucleoside queuosine (7-(((4,5-cis-dihydroxy-2-cyclopenten-1-yl)amino)methyl)-7-deazaguanosine). The protein is Queuine tRNA-ribosyltransferase accessory subunit 2 of Caenorhabditis briggsae.